Here is a 511-residue protein sequence, read N- to C-terminus: Chromosomal replication initiator protein DnaA (511 aa).

A domain I, interacts with DnaA modulators region spans residues 1–90; it reads MSVELWQQCV…RRSSAPRAAP (90 aa). The segment at 91–174 is domain II; sequence NAPVSAAMAA…QVEGALKHTS (84 aa). The interval 125–161 is disordered; sequence TAEPAQASDMAEASSRDSYDSMADSAPAPVAPGRTEQ. Positions 175 to 391 are domain III, AAA+ region; the sequence is YLNRTFTFET…GALKRVIAHS (217 aa). ATP is bound by residues Gly219, Gly221, Lys222, and Thr223. Residues 392 to 511 form a domain IV, binds dsDNA region; that stretch reads HFMGRDITIE…YKNLLRTLTT (120 aa).

It belongs to the DnaA family. Oligomerizes as a right-handed, spiral filament on DNA at oriC.

It is found in the cytoplasm. Plays an essential role in the initiation and regulation of chromosomal replication. ATP-DnaA binds to the origin of replication (oriC) to initiate formation of the DNA replication initiation complex once per cell cycle. Binds the DnaA box (a 9 base pair repeat at the origin) and separates the double-stranded (ds)DNA. Forms a right-handed helical filament on oriC DNA; dsDNA binds to the exterior of the filament while single-stranded (ss)DNA is stabiized in the filament's interior. The ATP-DnaA-oriC complex binds and stabilizes one strand of the AT-rich DNA unwinding element (DUE), permitting loading of DNA polymerase. After initiation quickly degrades to an ADP-DnaA complex that is not apt for DNA replication. Binds acidic phospholipids. The polypeptide is Chromosomal replication initiator protein DnaA (Pseudomonas putida (strain W619)).